A 260-amino-acid polypeptide reads, in one-letter code: Ubiquinone/menaquinone biosynthesis C-methyltransferase UbiE (260 aa).

S-adenosyl-L-methionine-binding positions include T83, D104, and 132-133 (NA).

The protein belongs to the class I-like SAM-binding methyltransferase superfamily. MenG/UbiE family.

It catalyses the reaction a 2-demethylmenaquinol + S-adenosyl-L-methionine = a menaquinol + S-adenosyl-L-homocysteine + H(+). The enzyme catalyses a 2-methoxy-6-(all-trans-polyprenyl)benzene-1,4-diol + S-adenosyl-L-methionine = a 5-methoxy-2-methyl-3-(all-trans-polyprenyl)benzene-1,4-diol + S-adenosyl-L-homocysteine + H(+). It functions in the pathway quinol/quinone metabolism; menaquinone biosynthesis; menaquinol from 1,4-dihydroxy-2-naphthoate: step 2/2. The protein operates within cofactor biosynthesis; ubiquinone biosynthesis. In terms of biological role, methyltransferase required for the conversion of demethylmenaquinol (DMKH2) to menaquinol (MKH2) and the conversion of 2-polyprenyl-6-methoxy-1,4-benzoquinol (DDMQH2) to 2-polyprenyl-3-methyl-6-methoxy-1,4-benzoquinol (DMQH2). The chain is Ubiquinone/menaquinone biosynthesis C-methyltransferase UbiE from Bartonella tribocorum (strain CIP 105476 / IBS 506).